The sequence spans 80 residues: D-alanyl carrier protein (80 aa).

Residues 1–77 (MDIQKQIVDI…KLVEQVKKLQ (77 aa)) form the Carrier domain. Ser35 is subject to O-(pantetheine 4'-phosphoryl)serine.

It belongs to the DltC family. In terms of processing, 4'-phosphopantetheine is transferred from CoA to a specific serine of apo-DCP.

The protein localises to the cytoplasm. Its pathway is cell wall biogenesis; lipoteichoic acid biosynthesis. Its function is as follows. Carrier protein involved in the D-alanylation of lipoteichoic acid (LTA). The loading of thioester-linked D-alanine onto DltC is catalyzed by D-alanine--D-alanyl carrier protein ligase DltA. The DltC-carried D-alanyl group is further transferred to cell membrane phosphatidylglycerol (PG) by forming an ester bond, probably catalyzed by DltD. D-alanylation of LTA plays an important role in modulating the properties of the cell wall in Gram-positive bacteria, influencing the net charge of the cell wall. The protein is D-alanyl carrier protein of Lactobacillus delbrueckii subsp. bulgaricus (strain ATCC 11842 / DSM 20081 / BCRC 10696 / JCM 1002 / NBRC 13953 / NCIMB 11778 / NCTC 12712 / WDCM 00102 / Lb 14).